The primary structure comprises 459 residues: Methylenetetrahydrofolate--tRNA-(uracil-5-)-methyltransferase TrmFO (459 aa).

26–31 serves as a coordination point for FAD; the sequence is GGGLAG.

This sequence belongs to the MnmG family. TrmFO subfamily. It depends on FAD as a cofactor.

Its subcellular location is the cytoplasm. It catalyses the reaction uridine(54) in tRNA + (6R)-5,10-methylene-5,6,7,8-tetrahydrofolate + NADH + H(+) = 5-methyluridine(54) in tRNA + (6S)-5,6,7,8-tetrahydrofolate + NAD(+). The catalysed reaction is uridine(54) in tRNA + (6R)-5,10-methylene-5,6,7,8-tetrahydrofolate + NADPH + H(+) = 5-methyluridine(54) in tRNA + (6S)-5,6,7,8-tetrahydrofolate + NADP(+). Its function is as follows. Catalyzes the folate-dependent formation of 5-methyl-uridine at position 54 (M-5-U54) in all tRNAs. This chain is Methylenetetrahydrofolate--tRNA-(uracil-5-)-methyltransferase TrmFO, found in Synechococcus sp. (strain JA-2-3B'a(2-13)) (Cyanobacteria bacterium Yellowstone B-Prime).